A 162-amino-acid chain; its full sequence is Transcriptional regulator MraZ (162 aa).

SpoVT-AbrB domains follow at residues 11 to 62 (EHPS…GLSV) and 98 to 141 (AVEC…SRDT).

The protein belongs to the MraZ family. Forms oligomers.

Its subcellular location is the cytoplasm. The protein localises to the nucleoid. The chain is Transcriptional regulator MraZ from Pelobacter propionicus (strain DSM 2379 / NBRC 103807 / OttBd1).